The sequence spans 216 residues: Somatotropin (216 aa).

A signal peptide spans 1–26 (MAADPQSSVLLAFALLCLPWPQEVGA). Histidine 45 is a Zn(2+) binding site. An intrachain disulfide couples cysteine 78 to cysteine 189. Serine 131 bears the Phosphoserine mark. Zn(2+) is bound at residue glutamate 198. Cysteine 206 and cysteine 214 are oxidised to a cystine.

Belongs to the somatotropin/prolactin family.

The protein localises to the secreted. Its function is as follows. Plays an important role in growth control. Its major role in stimulating body growth is to stimulate the liver and other tissues to secrete IGF1. It stimulates both the differentiation and proliferation of myoblasts. It also stimulates amino acid uptake and protein synthesis in muscle and other tissues. The sequence is that of Somatotropin (GH1) from Ailuropoda melanoleuca (Giant panda).